A 430-amino-acid chain; its full sequence is 3-phosphoshikimate 1-carboxyvinyltransferase (430 aa).

Residues Lys-23, Ser-24, and Arg-28 each contribute to the 3-phosphoshikimate site. Lys-23 provides a ligand contact to phosphoenolpyruvate. Residues Gly-95 and Arg-123 each coordinate phosphoenolpyruvate. Positions 169, 171, 315, and 342 each coordinate 3-phosphoshikimate. Gln-171 serves as a coordination point for phosphoenolpyruvate. Asp-315 functions as the Proton acceptor in the catalytic mechanism. Phosphoenolpyruvate is bound by residues Arg-346 and Arg-388.

This sequence belongs to the EPSP synthase family. Monomer.

The protein localises to the cytoplasm. It catalyses the reaction 3-phosphoshikimate + phosphoenolpyruvate = 5-O-(1-carboxyvinyl)-3-phosphoshikimate + phosphate. The protein operates within metabolic intermediate biosynthesis; chorismate biosynthesis; chorismate from D-erythrose 4-phosphate and phosphoenolpyruvate: step 6/7. Its function is as follows. Catalyzes the transfer of the enolpyruvyl moiety of phosphoenolpyruvate (PEP) to the 5-hydroxyl of shikimate-3-phosphate (S3P) to produce enolpyruvyl shikimate-3-phosphate and inorganic phosphate. This Streptococcus pyogenes serotype M3 (strain ATCC BAA-595 / MGAS315) protein is 3-phosphoshikimate 1-carboxyvinyltransferase.